We begin with the raw amino-acid sequence, 258 residues long: UDP-2,3-diacylglucosamine hydrolase (258 aa).

Positions 15, 17, 48, 88, and 123 each coordinate Mn(2+). A substrate-binding site is contributed by 88 to 89; sequence NR. Substrate is bound by residues Asp-131, Ser-169, Asn-173, Lys-176, and His-204. 2 residues coordinate Mn(2+): His-204 and His-206.

This sequence belongs to the LpxH family. It depends on Mn(2+) as a cofactor.

The protein resides in the cell inner membrane. It carries out the reaction UDP-2-N,3-O-bis[(3R)-3-hydroxytetradecanoyl]-alpha-D-glucosamine + H2O = 2-N,3-O-bis[(3R)-3-hydroxytetradecanoyl]-alpha-D-glucosaminyl 1-phosphate + UMP + 2 H(+). It participates in glycolipid biosynthesis; lipid IV(A) biosynthesis; lipid IV(A) from (3R)-3-hydroxytetradecanoyl-[acyl-carrier-protein] and UDP-N-acetyl-alpha-D-glucosamine: step 4/6. In terms of biological role, hydrolyzes the pyrophosphate bond of UDP-2,3-diacylglucosamine to yield 2,3-diacylglucosamine 1-phosphate (lipid X) and UMP by catalyzing the attack of water at the alpha-P atom. Involved in the biosynthesis of lipid A, a phosphorylated glycolipid that anchors the lipopolysaccharide to the outer membrane of the cell. This chain is UDP-2,3-diacylglucosamine hydrolase, found in Bordetella pertussis (strain Tohama I / ATCC BAA-589 / NCTC 13251).